A 92-amino-acid chain; its full sequence is Small ribosomal subunit protein uS19 (92 aa).

It belongs to the universal ribosomal protein uS19 family.

Functionally, protein S19 forms a complex with S13 that binds strongly to the 16S ribosomal RNA. This chain is Small ribosomal subunit protein uS19, found in Baumannia cicadellinicola subsp. Homalodisca coagulata.